The sequence spans 295 residues: Proline-rich protein 18 (295 aa).

The segment covering M1 to A13 has biased composition (pro residues). The disordered stretch occupies residues M1 to A133. Positions P14–A29 are enriched in low complexity. The residue at position 47 (S47) is a Phosphoserine. R83 bears the Omega-N-methylarginine mark. Positions A103–G126 are enriched in low complexity. R172 bears the Asymmetric dimethylarginine mark. A compositionally biased stretch (low complexity) spans A181 to A192. Residues A181–R227 are disordered. R188 bears the Omega-N-methylarginine mark.

The sequence is that of Proline-rich protein 18 (PRR18) from Homo sapiens (Human).